We begin with the raw amino-acid sequence, 157 residues long: GTP-dependent dephospho-CoA kinase (157 aa).

The GTP site is built by Asp40, Asp59, Lys61, Glu107, and Asp128.

The protein belongs to the GTP-dependent DPCK family.

It catalyses the reaction 3'-dephospho-CoA + GTP = GDP + CoA + H(+). The protein operates within cofactor biosynthesis; coenzyme A biosynthesis. In terms of biological role, catalyzes the GTP-dependent phosphorylation of the 3'-hydroxyl group of dephosphocoenzyme A to form coenzyme A (CoA). This Desulfurococcus amylolyticus (strain DSM 18924 / JCM 16383 / VKM B-2413 / 1221n) (Desulfurococcus kamchatkensis) protein is GTP-dependent dephospho-CoA kinase.